The primary structure comprises 662 residues: Bifunctional polymyxin resistance protein ArnA (662 aa).

The formyltransferase ArnAFT stretch occupies residues 1 to 307; the sequence is MTSKAVVFAY…ELGLVEGARL (307 aa). H106 (proton donor; for formyltransferase activity) is an active-site residue. (6R)-10-formyltetrahydrofolate is bound by residues R116 and 138-142; that span reads IERAD. The segment at 316-662 is dehydrogenase ArnADH; it reads RRTRVLILGV…EALREREAQA (347 aa). NAD(+)-binding positions include D349 and 370-371; that span reads DI. UDP-alpha-D-glucuronate contacts are provided by residues A395, Y400, and 434–435; that span reads TS. Catalysis depends on E436, which acts as the Proton acceptor; for decarboxylase activity. UDP-alpha-D-glucuronate-binding positions include R462, N493, 527 to 536, and Y614; that span reads RLVDGGAQKR. Residue R620 is the Proton donor; for decarboxylase activity of the active site.

In the N-terminal section; belongs to the Fmt family. UDP-L-Ara4N formyltransferase subfamily. The protein in the C-terminal section; belongs to the NAD(P)-dependent epimerase/dehydratase family. UDP-glucuronic acid decarboxylase subfamily. In terms of assembly, homohexamer, formed by a dimer of trimers.

The catalysed reaction is UDP-alpha-D-glucuronate + NAD(+) = UDP-beta-L-threo-pentopyranos-4-ulose + CO2 + NADH. It catalyses the reaction UDP-4-amino-4-deoxy-beta-L-arabinose + (6R)-10-formyltetrahydrofolate = UDP-4-deoxy-4-formamido-beta-L-arabinose + (6S)-5,6,7,8-tetrahydrofolate + H(+). It participates in nucleotide-sugar biosynthesis; UDP-4-deoxy-4-formamido-beta-L-arabinose biosynthesis; UDP-4-deoxy-4-formamido-beta-L-arabinose from UDP-alpha-D-glucuronate: step 1/3. It functions in the pathway nucleotide-sugar biosynthesis; UDP-4-deoxy-4-formamido-beta-L-arabinose biosynthesis; UDP-4-deoxy-4-formamido-beta-L-arabinose from UDP-alpha-D-glucuronate: step 3/3. The protein operates within bacterial outer membrane biogenesis; lipopolysaccharide biosynthesis. Functionally, bifunctional enzyme that catalyzes the oxidative decarboxylation of UDP-glucuronic acid (UDP-GlcUA) to UDP-4-keto-arabinose (UDP-Ara4O) and the addition of a formyl group to UDP-4-amino-4-deoxy-L-arabinose (UDP-L-Ara4N) to form UDP-L-4-formamido-arabinose (UDP-L-Ara4FN). The modified arabinose is attached to lipid A and is required for resistance to polymyxin and cationic antimicrobial peptides. This Pseudomonas aeruginosa (strain LESB58) protein is Bifunctional polymyxin resistance protein ArnA.